Consider the following 259-residue polypeptide: Aminoglycoside 3'-phosphotransferase (259 aa).

Asp187 (proton acceptor) is an active-site residue.

The protein belongs to the aminoglycoside phosphotransferase family.

The enzyme catalyses kanamycin A + ATP = kanamycin 3'-phosphate + ADP + H(+). In terms of biological role, resistance to kanamycin and structurally-related aminoglycosides, including amikacin. In Acinetobacter baumannii, this protein is Aminoglycoside 3'-phosphotransferase (aphA-6).